We begin with the raw amino-acid sequence, 138 residues long: NADH dehydrogenase [ubiquinone] 1 alpha subcomplex subunit N7BM (138 aa).

Belongs to the complex I NDUFA12 subunit family. As to quaternary structure, complex I is composed of 42 different subunits.

It localises to the mitochondrion inner membrane. Accessory subunit of the mitochondrial membrane respiratory chain NADH dehydrogenase (Complex I), that is believed not to be involved in catalysis. Complex I functions in the transfer of electrons from NADH to the respiratory chain. The immediate electron acceptor for the enzyme is believed to be ubiquinone. The sequence is that of NADH dehydrogenase [ubiquinone] 1 alpha subcomplex subunit N7BM from Yarrowia lipolytica (strain CLIB 122 / E 150) (Yeast).